The primary structure comprises 333 residues: Adenosine deaminase (333 aa).

2 residues coordinate Zn(2+): H12 and H14. Substrate contacts are provided by H14, D16, and G170. H197 is a Zn(2+) binding site. E200 acts as the Proton donor in catalysis. A Zn(2+)-binding site is contributed by D278. Position 279 (D279) interacts with substrate.

The protein belongs to the metallo-dependent hydrolases superfamily. Adenosine and AMP deaminases family. Adenosine deaminase subfamily. Requires Zn(2+) as cofactor.

It catalyses the reaction adenosine + H2O + H(+) = inosine + NH4(+). The catalysed reaction is 2'-deoxyadenosine + H2O + H(+) = 2'-deoxyinosine + NH4(+). Functionally, catalyzes the hydrolytic deamination of adenosine and 2-deoxyadenosine. This is Adenosine deaminase from Escherichia coli O45:K1 (strain S88 / ExPEC).